The chain runs to 991 residues: Adhesion G-protein coupled receptor F3 (991 aa).

Residues 1-20 (MSSLALSQLLLAVTLPLLEL) form the signal peptide. Over 21-694 (EPTFVPTAQS…ENPTLDLLSQ (674 aa)) the chain is Extracellular. N-linked (GlcNAc...) asparagine glycosylation is found at asparagine 75, asparagine 102, asparagine 118, asparagine 321, asparagine 362, asparagine 484, asparagine 571, asparagine 589, asparagine 630, and asparagine 660. The GAIN-B domain occupies 519–684 (HPFSFSSANV…SILMSQHTVP (166 aa)). Disulfide bonds link cysteine 635-cysteine 666 and cysteine 654-cysteine 668. The tract at residues 635-684 (CVFWDHRVFQGQGGWSDEGCEVHAANASITQCICQHLTAFSILMSQHTVP) is GPS. A helical transmembrane segment spans residues 695-715 (VGTGASVLALLVCLAIYGLVW). The Cytoplasmic portion of the chain corresponds to 716–730 (RVVVRNKVAFFRHTT). Residues 731-751 (LFNMVICLLVADTCFLGSPFL) form a helical membrane-spanning segment. Residues 752-757 (PSGYHS) are Extracellular-facing. The chain crosses the membrane as a helical span at residues 758-778 (LICLVTAFLCHFFYLATFFWM). The Cytoplasmic portion of the chain corresponds to 779-799 (LAQALVLAHQLLFVFHQLSKH). A helical transmembrane segment spans residues 800-820 (VVLSLMVMLGYLCPLGFAGVT). Residues 821 to 850 (LGLYLPQRKYLWEGKCFLNGGGVMLYSFSE) are Extracellular-facing. A helical transmembrane segment spans residues 851–871 (PVLAIVGVNGLVLVIAVLKLL). Over 872-892 (RPSLSEGPTVEKRQALVGVLK) the chain is Cytoplasmic. The chain crosses the membrane as a helical span at residues 893–913 (ALLILTPIFGLTWGLGVATLF). The Extracellular portion of the chain corresponds to 914–916 (DGS). Residues 917 to 937 (IVSHYAFSILNSLQGVFILVF) form a helical membrane-spanning segment. Residues 938 to 991 (GCLTDKKVLEALRKRLRGSRSSNSAISMVTNETYTSEHSKERSEPASYEERMTD) lie on the Cytoplasmic side of the membrane. A disordered region spans residues 964 to 991 (SMVTNETYTSEHSKERSEPASYEERMTD). A compositionally biased stretch (basic and acidic residues) spans 972 to 991 (TSEHSKERSEPASYEERMTD).

This sequence belongs to the G-protein coupled receptor 2 family. Adhesion G-protein coupled receptor (ADGR) subfamily. In terms of assembly, heterodimer of 2 chains generated by proteolytic processing; the large extracellular N-terminal fragment and the membrane-bound C-terminal fragment predominantly remain associated and non-covalently linked. In terms of processing, autoproteolytically processed at the GPS region of the GAIN-B domain; this cleavage modulates receptor activity. In terms of tissue distribution, expression is restricted to testis and circumvallate papillae.

It is found in the membrane. Its function is as follows. Orphan receptor. The polypeptide is Adhesion G-protein coupled receptor F3 (ADGRF3) (Mus musculus (Mouse)).